The sequence spans 88 residues: Translation initiation factor IF-1 1 (88 aa).

The S1-like domain maps to 1–72 (MSKEDMIELE…TKGRINFRHP (72 aa)). The disordered stretch occupies residues 66–88 (RINFRHPTANPGAGPRPSHHHRR).

This sequence belongs to the IF-1 family. Component of the 30S ribosomal translation pre-initiation complex which assembles on the 30S ribosome in the order IF-2 and IF-3, IF-1 and N-formylmethionyl-tRNA(fMet); mRNA recruitment can occur at any time during PIC assembly.

Its subcellular location is the cytoplasm. Functionally, one of the essential components for the initiation of protein synthesis. Stabilizes the binding of IF-2 and IF-3 on the 30S subunit to which N-formylmethionyl-tRNA(fMet) subsequently binds. Helps modulate mRNA selection, yielding the 30S pre-initiation complex (PIC). Upon addition of the 50S ribosomal subunit IF-1, IF-2 and IF-3 are released leaving the mature 70S translation initiation complex. This Chromobacterium violaceum (strain ATCC 12472 / DSM 30191 / JCM 1249 / CCUG 213 / NBRC 12614 / NCIMB 9131 / NCTC 9757 / MK) protein is Translation initiation factor IF-1 1.